Consider the following 312-residue polypeptide: Peroxidase (312 aa).

The signal sequence occupies residues 1–23; the sequence is MAMGSASCISLVVLVALATAASG. Gln-24 is modified (pyrrolidone carboxylic acid). Cystine bridges form between Cys-34-Cys-107, Cys-67-Cys-70, Cys-113-Cys-307, and Cys-192-Cys-218. His-65 (proton acceptor) is an active-site residue. Positions 66, 69, 71, and 73 each coordinate Ca(2+). Pro-155 provides a ligand contact to substrate. His-185 lines the heme b pocket. Thr-186 is a Ca(2+) binding site. Ca(2+)-binding residues include Asp-231, Thr-234, and Asp-239. Asn-262 carries an N-linked (GlcNAc...) asparagine glycan.

Belongs to the peroxidase family. Classical plant (class III) peroxidase subfamily. It depends on Ca(2+) as a cofactor. Requires heme b as cofactor. In terms of tissue distribution, root.

The protein resides in the secreted. The catalysed reaction is 2 a phenolic donor + H2O2 = 2 a phenolic radical donor + 2 H2O. Its function is as follows. Removal of H(2)O(2), oxidation of toxic reductants, biosynthesis and degradation of lignin, suberization, auxin catabolism, response to environmental stresses such as wounding, pathogen attack and oxidative stress. These functions might be dependent on each isozyme/isoform in each plant tissue. Functionally, involved in defense response to powdery meldew fungus. The protein is Peroxidase of Triticum aestivum (Wheat).